Here is a 367-residue protein sequence, read N- to C-terminus: Quinolinate synthase (367 aa).

Residues His64 and Ser82 each contribute to the iminosuccinate site. Cys127 provides a ligand contact to [4Fe-4S] cluster. Iminosuccinate-binding positions include Tyr153–Asn155 and Ser170. Cys216 is a [4Fe-4S] cluster binding site. Iminosuccinate contacts are provided by residues His242–Glu244 and Thr259. Position 302 (Cys302) interacts with [4Fe-4S] cluster.

Belongs to the quinolinate synthase family. Type 2 subfamily. It depends on [4Fe-4S] cluster as a cofactor.

It is found in the cytoplasm. It catalyses the reaction iminosuccinate + dihydroxyacetone phosphate = quinolinate + phosphate + 2 H2O + H(+). It functions in the pathway cofactor biosynthesis; NAD(+) biosynthesis; quinolinate from iminoaspartate: step 1/1. Its function is as follows. Catalyzes the condensation of iminoaspartate with dihydroxyacetone phosphate to form quinolinate. The sequence is that of Quinolinate synthase from Caulobacter vibrioides (strain ATCC 19089 / CIP 103742 / CB 15) (Caulobacter crescentus).